A 261-amino-acid chain; its full sequence is MKLPFLNKNHSTSSYSSNSSSSSWPWPSCNQNPKTLSFRATITFTNPIHDQDDDELDLLDPPEITDSVENVIKGLRSSERLIFESKGETNSILEEATSKREEEDEEEGFMLFSLESDDPYSDFKRSMEEMVEAHALHHDWKSLEKLLLQFLKVNAKTSHRYIFAAFVDLLMNLALDTKKAIINNDISKDDGVSASRAAAAGEASTSCCNSMTLGESPSSPLSFYTSCSSSSSSDETSSMSVRFLPLSSLLEMDEKTKEILV.

Residues 1-28 are disordered; that stretch reads MKLPFLNKNHSTSSYSSNSSSSSWPWPS. Over residues 11–28 the composition is skewed to low complexity; the sequence is STSSYSSNSSSSSWPWPS. The 61-residue stretch at 112–172 folds into the OVATE domain; the sequence is FSLESDDPYS…FAAFVDLLMN (61 aa).

Interacts with BLH1 and BLH3. Expressed in roots, cauline leaves, shoots, flower buds and siliques.

The protein resides in the nucleus. In terms of biological role, transcriptional repressor that regulates multiple aspects of plant growth and development through the regulation of BEL1-LIKE (BLH) and KNOX TALE (KNAT) homeodomain transcription factors. The protein is Transcription repressor OFP15 (OFP15) of Arabidopsis thaliana (Mouse-ear cress).